A 111-amino-acid chain; its full sequence is Prefoldin subunit 2 (111 aa).

Coiled-coil stretches lie at residues 1-36 (MEQR…KDEH) and 72-92 (LETK…TLIQ).

It belongs to the prefoldin subunit beta family. Heterohexamer of two PFD-alpha type and four PFD-beta type subunits.

The protein resides in the cytoplasm. Its function is as follows. Binds specifically to cytosolic chaperonin (c-CPN) and transfers target proteins to it. Binds to nascent polypeptide chain and promotes folding in an environment in which there are many competing pathways for nonnative proteins. In Saccharomyces cerevisiae (strain ATCC 204508 / S288c) (Baker's yeast), this protein is Prefoldin subunit 2 (GIM4).